A 145-amino-acid polypeptide reads, in one-letter code: Class I hydrophobin 1 (145 aa).

The first 18 residues, 1–18, serve as a signal peptide directing secretion; the sequence is MYASVIIYTLVALCGVMS. Intrachain disulfides connect cysteine 88–cysteine 118, cysteine 95–cysteine 112, cysteine 96–cysteine 106, and cysteine 119–cysteine 128. N-linked (GlcNAc...) asparagine glycosylation is present at asparagine 108.

This sequence belongs to the fungal hydrophobin family. In terms of assembly, self-assembles to form functional amyloid fibrils called rodlets. Self-assembly into fibrillar rodlets occurs spontaneously at hydrophobic:hydrophilic interfaces and the rodlets further associate laterally to form amphipathic monolayers.

It is found in the secreted. Its subcellular location is the cell wall. Its function is as follows. Aerial growth, conidiation, and dispersal of filamentous fungi in the environment rely upon a capability of their secreting small amphipathic proteins called hydrophobins (HPBs) with low sequence identity. Class I can self-assemble into an outermost layer of rodlet bundles on aerial cell surfaces, conferring cellular hydrophobicity that supports fungal growth, development and dispersal; whereas Class II form highly ordered films at water-air interfaces through intermolecular interactions but contribute nothing to the rodlet structure. Hyd1 is a class I hydrophobin that is involved in plant root attachment and colonization, and that might also protect the growing hyphae from locally synthesized plant defense compounds during the first stages of cucumber interaction, allowing this opportunistic, non-pathogenic fungus to colonize the intercellular spaces of the plant root. The polypeptide is Class I hydrophobin 1 (Trichoderma asperellum (Filamentous fungus)).